The primary structure comprises 71 residues: Palustrin-2AJ2 (71 aa).

The first 22 residues, 1–22, serve as a signal peptide directing secretion; that stretch reads MFTLKKPLLVLLFLGTVSLSLC. A propeptide spanning residues 23–40 is cleaved from the precursor; the sequence is EQERAADDDEGEVIEEEV. Cys-65 and Cys-71 are joined by a disulfide.

In terms of tissue distribution, expressed by the skin glands.

The protein localises to the secreted. Functionally, displays broad-spectrum antibacterial activity against a range of Gram-positive and Gram-negative bacteria. Has low hemolytic activity, low cytotoxicity and low antioxidant activity. The protein is Palustrin-2AJ2 of Amolops jingdongensis (Chinese torrent frog).